We begin with the raw amino-acid sequence, 245 residues long: Ubiquinone/menaquinone biosynthesis C-methyltransferase UbiE (245 aa).

S-adenosyl-L-methionine is bound by residues T71, D92, and 118–119; that span reads DA.

Belongs to the class I-like SAM-binding methyltransferase superfamily. MenG/UbiE family.

It catalyses the reaction a 2-demethylmenaquinol + S-adenosyl-L-methionine = a menaquinol + S-adenosyl-L-homocysteine + H(+). It carries out the reaction a 2-methoxy-6-(all-trans-polyprenyl)benzene-1,4-diol + S-adenosyl-L-methionine = a 5-methoxy-2-methyl-3-(all-trans-polyprenyl)benzene-1,4-diol + S-adenosyl-L-homocysteine + H(+). It participates in quinol/quinone metabolism; menaquinone biosynthesis; menaquinol from 1,4-dihydroxy-2-naphthoate: step 2/2. Its pathway is cofactor biosynthesis; ubiquinone biosynthesis. Functionally, methyltransferase required for the conversion of demethylmenaquinol (DMKH2) to menaquinol (MKH2) and the conversion of 2-polyprenyl-6-methoxy-1,4-benzoquinol (DDMQH2) to 2-polyprenyl-3-methyl-6-methoxy-1,4-benzoquinol (DMQH2). The protein is Ubiquinone/menaquinone biosynthesis C-methyltransferase UbiE of Neisseria meningitidis serogroup C / serotype 2a (strain ATCC 700532 / DSM 15464 / FAM18).